Consider the following 55-residue polypeptide: Large ribosomal subunit protein bL33 (55 aa).

The protein belongs to the bacterial ribosomal protein bL33 family.

The sequence is that of Large ribosomal subunit protein bL33 from Leifsonia xyli subsp. xyli (strain CTCB07).